Here is an 87-residue protein sequence, read N- to C-terminus: MKVLRAWLLCLLMLGLALRGAASRTHRHSMEIRTPDINPAWYASRGIRPVGRFGRRRATLGDVPKPGLRPRLTCFPLEGGAMSSQDG.

Positions 1–22 are cleaved as a signal peptide; that stretch reads MKVLRAWLLCLLMLGLALRGAA. Phenylalanine amide is present on Phe-53. Residues 58-87 constitute a propeptide that is removed on maturation; the sequence is ATLGDVPKPGLRPRLTCFPLEGGAMSSQDG.

Medulla oblongata and hypothalamus.

The protein resides in the secreted. Stimulates prolactin (PRL) release and regulates the expression of prolactin through its receptor GPR10. May stimulate lactotrophs directly to secrete PRL. The chain is Prolactin-releasing peptide (PRLH) from Homo sapiens (Human).